Reading from the N-terminus, the 342-residue chain is Manganese-dependent ADP-ribose/CDP-alcohol diphosphatase (342 aa).

M1 is subject to N-acetylmethionine. D25, Q27, D74, N110, H241, H278, and H280 together coordinate Zn(2+).

Belongs to the ADPRibase-Mn family. Monomer. Mg(2+) serves as cofactor.

The catalysed reaction is CDP-choline + H2O = phosphocholine + CMP + 2 H(+). It carries out the reaction ADP-D-ribose + H2O = D-ribose 5-phosphate + AMP + 2 H(+). It catalyses the reaction CDP-glycerol + H2O = sn-glycerol 3-phosphate + CMP + 2 H(+). Its function is as follows. Hydrolyzes ADP-ribose, IDP-ribose, CDP-glycerol, CDP-choline and CDP-ethanolamine, but not other non-reducing ADP-sugars or CDP-glucose. May be involved in immune cell signaling as suggested by the second-messenger role of ADP-ribose, which activates TRPM2 as a mediator of oxidative/nitrosative stress. The polypeptide is Manganese-dependent ADP-ribose/CDP-alcohol diphosphatase (ADPRM) (Homo sapiens (Human)).